We begin with the raw amino-acid sequence, 391 residues long: Zinc finger protein DPF3 (391 aa).

The segment covering 152-165 has biased composition (acidic residues); that stretch reads ENGDGFHDDEDFEV. 2 disordered regions span residues 152–200 and 236–266; these read ENGD…PYVC and LAEE…QKAP. Basic residues predominate over residues 169–183; the sequence is KRKHRNKGRGRGSGR. The C2H2-type zinc-finger motif lies at 198–235; it reads YVCDNRYKQKHNSKTADSVCGKRYKNRPGLSYHYAHTH. 2 PHD-type zinc fingers span residues 273–333 and 330–380; these read NDYC…CKSC and CKSC…CQNL.

Component of the BAF complex. Interacts with acetylated histones H3 and H4. Component of neuron-specific chromatin remodeling complex (nBAF complex), a subfamily of ATP-dependent SWI/SNF chromatin remodeling complexes. As to expression, expressed in the heart and somites.

It is found in the nucleus. Functionally, muscle-specific component of the BAF complex, a multiprotein complex involved in transcriptional activation and repression of select genes by chromatin remodeling (alteration of DNA-nucleosome topology). Specifically binds acetylated lysines on histone 3 and 4. In the complex, it acts as a tissue-specific anchor between histone acetylations and methylations and chromatin remodeling. Belongs to the neuron-specific chromatin remodeling complex (nBAF complex) and may play a role in neural development. Plays an essential role in heart and skeletal muscle development. This chain is Zinc finger protein DPF3 (dpf3), found in Danio rerio (Zebrafish).